The following is a 247-amino-acid chain: Triosephosphate isomerase (247 aa).

10–12 contributes to the substrate binding site; the sequence is NWK. The Electrophile role is filled by His-92. The active-site Proton acceptor is Glu-164. Substrate contacts are provided by residues Gly-170, Ser-209, and 230–231; that span reads GG.

It belongs to the triosephosphate isomerase family. As to quaternary structure, homodimer.

The protein localises to the cytoplasm. It catalyses the reaction D-glyceraldehyde 3-phosphate = dihydroxyacetone phosphate. Its pathway is carbohydrate biosynthesis; gluconeogenesis. It participates in carbohydrate degradation; glycolysis; D-glyceraldehyde 3-phosphate from glycerone phosphate: step 1/1. Functionally, involved in the gluconeogenesis. Catalyzes stereospecifically the conversion of dihydroxyacetone phosphate (DHAP) to D-glyceraldehyde-3-phosphate (G3P). The sequence is that of Triosephosphate isomerase from Alcanivorax borkumensis (strain ATCC 700651 / DSM 11573 / NCIMB 13689 / SK2).